We begin with the raw amino-acid sequence, 200 residues long: Glutathione S-transferase 1-1 (200 aa).

In terms of domain architecture, GST N-terminal spans 1 to 73 (GSSPCRSVIM…YLVEKYGKTD (73 aa)). Residues S2, 43–45 (HTI), and 57–59 (ESR) each bind glutathione. Residues 79-200 (CPKKRAVINQ…AGCLEFKKFF (122 aa)) enclose the GST C-terminal domain.

This sequence belongs to the GST superfamily. Theta family. As to quaternary structure, homodimer.

It carries out the reaction RX + glutathione = an S-substituted glutathione + a halide anion + H(+). It catalyses the reaction 1,1,1-trichloro-2,2-bis(4-chlorophenyl)ethane = 1,1-dichloro-2,2-bis(4-chlorophenyl)ethylene + chloride + H(+). In terms of biological role, conjugation of reduced glutathione to a wide number of exogenous and endogenous hydrophobic electrophiles. Has DDT dehydrochlorinase activity. The chain is Glutathione S-transferase 1-1 (GstD1) from Drosophila mauritiana (Fruit fly).